The primary structure comprises 227 residues: UPF0758 protein Spro_4842 (227 aa).

Residues 105-227 (AMLNPRMTQH…CVSFAERGWL (123 aa)) enclose the MPN domain. Zn(2+) is bound by residues histidine 176, histidine 178, and aspartate 189. The JAMM motif signature appears at 176 to 189 (HNHPSGKAEPSHAD).

The protein belongs to the UPF0758 family. YicR subfamily.

The sequence is that of UPF0758 protein Spro_4842 from Serratia proteamaculans (strain 568).